The primary structure comprises 339 residues: D-erythrose-4-phosphate dehydrogenase (339 aa).

NAD(+) is bound at residue 12-13 (RI). Substrate contacts are provided by residues 154 to 156 (SCT), Arg-200, 213 to 214 (TK), and Arg-236. Cys-155 (nucleophile) is an active-site residue. Asn-318 provides a ligand contact to NAD(+).

Belongs to the glyceraldehyde-3-phosphate dehydrogenase family. Epd subfamily. As to quaternary structure, homotetramer.

The protein localises to the cytoplasm. It catalyses the reaction D-erythrose 4-phosphate + NAD(+) + H2O = 4-phospho-D-erythronate + NADH + 2 H(+). It participates in cofactor biosynthesis; pyridoxine 5'-phosphate biosynthesis; pyridoxine 5'-phosphate from D-erythrose 4-phosphate: step 1/5. Catalyzes the NAD-dependent conversion of D-erythrose 4-phosphate to 4-phosphoerythronate. In Photorhabdus laumondii subsp. laumondii (strain DSM 15139 / CIP 105565 / TT01) (Photorhabdus luminescens subsp. laumondii), this protein is D-erythrose-4-phosphate dehydrogenase.